A 111-amino-acid chain; its full sequence is MTVLRSLVLFGLAALAEIGGAWLVWQGWREHRGLWWIAAGVIALGAYGFVATFQPDPDFGRVLAAYGGVFVVGSLAWGVLVDRFRPDRWDLLGAGICLVGVAVIMYAPRGG.

Helical transmembrane passes span 7–27 (LVLF…VWQG), 33–53 (GLWW…VATF), 62–82 (VLAA…VLVD), and 91–111 (LLGA…PRGG).

It belongs to the UPF0060 family.

It is found in the cell membrane. This Nocardia farcinica (strain IFM 10152) protein is UPF0060 membrane protein NFA_36830.